Here is a 131-residue protein sequence, read N- to C-terminus: Amicyanin (131 aa).

A signal peptide spans M1–A26. The region spanning D27–E131 is the Plastocyanin-like domain. Residues H79, C118, H121, and M124 each coordinate Cu cation.

Cu cation is required as a cofactor.

It is found in the periplasm. Its pathway is one-carbon metabolism; methylamine degradation. Functionally, primary acceptor of electrons from methylamine dehydrogenase. Passes those electrons on either a soluble cytochrome c or to pseudoazurin. This Paracoccus denitrificans protein is Amicyanin (mauC).